The primary structure comprises 118 residues: Large ribosomal subunit protein bL20 (118 aa).

Belongs to the bacterial ribosomal protein bL20 family.

Its function is as follows. Binds directly to 23S ribosomal RNA and is necessary for the in vitro assembly process of the 50S ribosomal subunit. It is not involved in the protein synthesizing functions of that subunit. The chain is Large ribosomal subunit protein bL20 from Desulforamulus reducens (strain ATCC BAA-1160 / DSM 100696 / MI-1) (Desulfotomaculum reducens).